A 172-amino-acid polypeptide reads, in one-letter code: C-phycocyanin beta chain (172 aa).

Asparagine 72 is modified (N4-methylasparagine). (2R,3E)-phycocyanobilin is bound by residues cysteine 82 and cysteine 153.

It belongs to the phycobiliprotein family. In terms of assembly, heterodimer of an alpha and a beta subunit, which further assembles into trimers and the trimers into hexamers. The basic functional unit of phycobiliproteins is a ring-shaped hexamer formed from two back-to-back trimers contacting via the alpha chain subunits. The trimers are composed of alpha/beta subunit heterodimers arranged around a three-fold axis of symmetry. The phycoerythrins also contain a gamma subunit which is located in the center of the hexamer. Contains two covalently linked bilin chromophores.

It is found in the plastid. The protein resides in the chloroplast thylakoid membrane. Functionally, light-harvesting photosynthetic bile pigment-protein from the phycobiliprotein complex (phycobilisome, PBS). Phycocyanin is the major phycobiliprotein in the PBS rod. The chain is C-phycocyanin beta chain (cpcB) from Pyropia haitanensis (Red seaweed).